The primary structure comprises 325 residues: Hydroxylase/desaturase poxK (325 aa).

The segment covering 1-12 (MTATATPVPTVA) has biased composition (low complexity). Positions 1–25 (MTATATPVPTVASHAQDITLPPPPK) are disordered.

This sequence belongs to the asaB hydroxylase/desaturase family.

It participates in secondary metabolite biosynthesis. Hydroxylase/desaturase; part of the gene cluster that mediates the biosynthesis of oxaleimides, cytotoxic compounds containing an unusual disubstituted succinimide moiety. The first step of the pathway is provided by the HR-PKS poxF that serves in a new mode of collaborative biosynthesis with the PKS-NRPS poxE, by providing the olefin containing amino acid substrate via the synthesis of an ACP-bound dec-4-enoate. The cytochrome P450 monooxygenase poxM-catalyzed oxidation at the alpha-position creates the enzyme-bound 2-hydroxydec-4-enoyl-ACP thioester, which may be prone to spontaneous hydrolysis to yield 2-hydroxydec-4-enoic acid due to increased electrophilicity of the carbonyl. 2-hydroxydec-4-enoic acid can then be further oxidized by poxM to yield the alpha-ketoacid 2-oxodec-4-enoicacid, which is reductively aminated by the aminotransferase poxL to yield (S,E)-2-aminodec-4-enoic acid. The Hybrid PKS-NRPS synthetase poxE then performs condensation between the octaketide product of its PKS modules and the amino group of (S,E)-2-aminodec-4-enoic acid which is activated and incorporated by the adenylation domain. The resulting aminoacyl product can be cyclized by the Diels-Alderase PoxQ and reductively released by the reductive (R) domain of poxE to yield an aldehyde intermediate. The released aldehyde is then substrate for a Knoevenagel condensation by the hydrolyase poxO followed by an oxidation at the 5-position of the pyrrolidone ring. The presence of the olefin from the amino acid building block allows for migration of the substituted allyl group to occur. This allylic transposition reaction takes place in a conjugate addition, semipinacol-like fashion to yield a succinimide intermediate. Iterative two-electron oxidations of the C7 methyl of the succinimide intermediate to the carboxylic acid can be catalyzed by one of two remaining cytochrome P450 monooxygenasess poxC or poxD to yield oxaleimide A. Subsequent oxidation yields the maleimide scaffold oxaleimide I. Both oxaleimide A and oxaleimide I can undergo oxidative modifications in the decalin ring to yield the series of products oxaleimides B to H. The sequence is that of Hydroxylase/desaturase poxK from Penicillium oxalicum (strain 114-2 / CGMCC 5302) (Penicillium decumbens).